Consider the following 249-residue polypeptide: 5'-nucleotidase SurE (249 aa).

The a divalent metal cation site is built by aspartate 9, aspartate 10, serine 40, and asparagine 92.

It belongs to the SurE nucleotidase family. Requires a divalent metal cation as cofactor.

The protein localises to the cytoplasm. It carries out the reaction a ribonucleoside 5'-phosphate + H2O = a ribonucleoside + phosphate. Nucleotidase that shows phosphatase activity on nucleoside 5'-monophosphates. This chain is 5'-nucleotidase SurE, found in Shewanella oneidensis (strain ATCC 700550 / JCM 31522 / CIP 106686 / LMG 19005 / NCIMB 14063 / MR-1).